A 206-amino-acid chain; its full sequence is Emopamil-binding protein-like (206 aa).

4 consecutive transmembrane segments (helical) span residues 10–30 (EAGS…ALGL), 42–62 (WVLA…GAFV), 101–121 (LEIL…YAIV), and 165–185 (LWVY…LLLW). An EXPERA domain is found at 39 to 184 (VERWVLAWLC…LWVLIPGLLL (146 aa)).

Belongs to the EBP family. As to quaternary structure, homodimer.

It is found in the endoplasmic reticulum membrane. Does not possess sterol isomerase activity and does not bind sigma ligands. The protein is Emopamil-binding protein-like (Ebpl) of Mus musculus (Mouse).